The chain runs to 518 residues: Two-component response regulator-like PRR1 (518 aa).

The region spanning 29–147 is the Response regulatory domain; it reads RILLCDSDPS…ELLNLWTHVW (119 aa). Disordered regions lie at residues 172–241, 266–305, and 483–518; these read PSDA…PGVM, TPTTSSFDSELQKGGNRLDSSDHRGNFSSTTDRSDTGTDV, and VRQANYTDITSTGDDISEDEDDDPSSREVEMVSSPE. Positions 196–212 are enriched in polar residues; it reads NQETSTSNQHEYESNPS. In terms of domain architecture, CCT spans 443–485; the sequence is RAAALAKFRLKRKERCFDKKVRYVNRKKLAETRPRVRGQFVRQ.

It belongs to the ARR-like family. In terms of assembly, interacts with PIL13. Interacts with PIL15.

The protein localises to the nucleus. Its function is as follows. Controls photoperiodic flowering response. Seems to be one of the component of the circadian clock. Expression of several members of the ARR-like family is controlled by circadian rhythm. The particular coordinated sequential expression of PRR73, PRR37, PRR95, PRR59 and PPR1 result to circadian waves that may be at the basis of the endogenous circadian clock. The chain is Two-component response regulator-like PRR1 (PRR1) from Oryza sativa subsp. japonica (Rice).